Reading from the N-terminus, the 96-residue chain is Small ribosomal subunit protein bS18c (96 aa).

This sequence belongs to the bacterial ribosomal protein bS18 family. As to quaternary structure, part of the 30S ribosomal subunit.

The protein localises to the plastid. It localises to the chloroplast. This Pinus thunbergii (Japanese black pine) protein is Small ribosomal subunit protein bS18c (rps18).